We begin with the raw amino-acid sequence, 489 residues long: Rhamnulokinase (489 aa).

Residue 13-17 participates in ATP binding; sequence ASSGR. Residues Cys68 and Cys222 are joined by a disulfide bond. Substrate is bound by residues Gly83 and 236–238; that span reads HDT. Residue Asp237 is the Proton acceptor of the active site. Residue Thr259 coordinates ATP. Residue Asn296 coordinates substrate. Residue Gln304 coordinates ATP. Cysteines 353 and 370 form a disulfide. ATP is bound at residue Gly402. Cys413 and Cys417 are joined by a disulfide.

Belongs to the rhamnulokinase family. Mg(2+) serves as cofactor.

The catalysed reaction is L-rhamnulose + ATP = L-rhamnulose 1-phosphate + ADP + H(+). Its pathway is carbohydrate degradation; L-rhamnose degradation; glycerone phosphate from L-rhamnose: step 2/3. Involved in the catabolism of L-rhamnose (6-deoxy-L-mannose). Catalyzes the transfer of the gamma-phosphate group from ATP to the 1-hydroxyl group of L-rhamnulose to yield L-rhamnulose 1-phosphate. In Salmonella paratyphi B (strain ATCC BAA-1250 / SPB7), this protein is Rhamnulokinase.